We begin with the raw amino-acid sequence, 300 residues long: 4-hydroxy-tetrahydrodipicolinate synthase (300 aa).

Pyruvate is bound at residue Thr56. Tyr145 acts as the Proton donor/acceptor in catalysis. The Schiff-base intermediate with substrate role is filled by Lys173. Residue Val215 coordinates pyruvate.

It belongs to the DapA family. Homotetramer; dimer of dimers.

It localises to the cytoplasm. The catalysed reaction is L-aspartate 4-semialdehyde + pyruvate = (2S,4S)-4-hydroxy-2,3,4,5-tetrahydrodipicolinate + H2O + H(+). The protein operates within amino-acid biosynthesis; L-lysine biosynthesis via DAP pathway; (S)-tetrahydrodipicolinate from L-aspartate: step 3/4. Catalyzes the condensation of (S)-aspartate-beta-semialdehyde [(S)-ASA] and pyruvate to 4-hydroxy-tetrahydrodipicolinate (HTPA). This chain is 4-hydroxy-tetrahydrodipicolinate synthase, found in Prochlorococcus marinus (strain MIT 9301).